Consider the following 147-residue polypeptide: Phage-like element PBSX protein XkdM (147 aa).

This sequence to B.subtilis YqbM.

This chain is Phage-like element PBSX protein XkdM (xkdM), found in Bacillus subtilis (strain 168).